The following is a 157-amino-acid chain: Small ribosomal subunit protein uS7 (157 aa).

This sequence belongs to the universal ribosomal protein uS7 family. In terms of assembly, part of the 30S ribosomal subunit. Contacts proteins S9 and S11.

One of the primary rRNA binding proteins, it binds directly to 16S rRNA where it nucleates assembly of the head domain of the 30S subunit. Is located at the subunit interface close to the decoding center, probably blocks exit of the E-site tRNA. The sequence is that of Small ribosomal subunit protein uS7 from Salinibacter ruber (strain DSM 13855 / M31).